The following is a 1235-amino-acid chain: ATP-dependent helicase/nuclease subunit A (1235 aa).

One can recognise a UvrD-like helicase ATP-binding domain in the interval 12 to 482 (SLWTDDQWKA…IDLSQNFRSR (471 aa)). An ATP-binding site is contributed by 33–40 (AAAGSGKT). Positions 509 to 800 (AAELTLGAKS…RMMTIHASKG (292 aa)) constitute a UvrD-like helicase C-terminal domain.

This sequence belongs to the helicase family. AddA subfamily. In terms of assembly, heterodimer of AddA and AddB/RexB. The cofactor is Mg(2+).

The catalysed reaction is Couples ATP hydrolysis with the unwinding of duplex DNA by translocating in the 3'-5' direction.. The enzyme catalyses ATP + H2O = ADP + phosphate + H(+). In terms of biological role, the heterodimer acts as both an ATP-dependent DNA helicase and an ATP-dependent, dual-direction single-stranded exonuclease. Recognizes the chi site generating a DNA molecule suitable for the initiation of homologous recombination. The AddA nuclease domain is required for chi fragment generation; this subunit has the helicase and 3' -&gt; 5' nuclease activities. The polypeptide is ATP-dependent helicase/nuclease subunit A (Listeria monocytogenes serotype 4a (strain HCC23)).